The chain runs to 263 residues: Elongin-A (263 aa).

2 disordered regions span residues Lys112–Lys147 and Ser170–Ile263. Polar residues-rich tracts occupy residues Arg186 to Pro206 and Ser214 to Gln229. A compositionally biased stretch (low complexity) spans Pro230–Pro245. Residues Ser253–Ile263 show a composition bias toward polar residues.

Belongs to the ELA1 family. As to quaternary structure, heterodimer with elc1. Component of a CRL3 E3 ubiquitin ligase complex consisting of a cullin, the linker protein elc1, the substrate receptor pof4/ela1, and the RING protein rbx1. Interacts with skp1.

Functionally, as part of the CRL3 E3 ubiquitin ligase complex; polyubiquitylates monoubiquitylated RNA polymerase II subunit rpb1 to trigger its proteolysis; plays a role in global genomic repair. In Schizosaccharomyces pombe (strain 972 / ATCC 24843) (Fission yeast), this protein is Elongin-A (pof4).